Reading from the N-terminus, the 259-residue chain is Formate channel BtFdhC (259 aa).

Residues 1-26 (MAFHKPEQIAELVIEAGVQKVSQTLP) are Cytoplasmic-facing. Residues 27–47 (AMLILGFLGGAFISLGFLLNI) traverse the membrane as a helical segment. At 48–66 (RVLGNLPERWGSLVNVLGG) the chain is on the periplasmic side. Residues 67-97 (AVFPVGLMLVVLAGGELITGNMMSLSMALYA) traverse the membrane as a helical segment. The Cytoplasmic segment spans residues 98 to 108 (KKITLVSVLNN). A helical transmembrane segment spans residues 109-130 (WVWITFMNFVGAIFVAYCFGHL). Residues 131–157 (GGLTEGDYLNKTVAIAEGKLHESFGRT) lie on the Periplasmic side of the membrane. Residues 158–176 (LILAIGCNWLVCLALWLAY) form a helical membrane-spanning segment. Residues 177–187 (GTSDFVGKIIG) lie on the Cytoplasmic side of the membrane. The helical transmembrane segment at 188 to 216 (IWIPIMAFVVIGFQQVVANMFVISAVIFA) threads the bilayer. Over 217–227 (GHLTWMDLARN) the chain is Periplasmic. Residues 228-250 (FVPVFIGNVIGGAGFVGFAYFAC) form a helical membrane-spanning segment. Residues 251–259 (YQKQHSNMK) are Cytoplasmic-facing.

This sequence belongs to the FNT transporter (TC 1.A.16) family.

The protein resides in the cell inner membrane. It carries out the reaction formate(in) = formate(out). Its function is as follows. Acts as a formate transporter. This Bacillus thuringiensis protein is Formate channel BtFdhC.